Reading from the N-terminus, the 338-residue chain is GDSL esterase/lipase At5g63170 (338 aa).

An N-terminal signal peptide occupies residues 1–23 (MNSLVIQTTIVLVSVISVSIVHA). Ser35 serves as the catalytic Nucleophile. Catalysis depends on residues Asp313 and His316.

Belongs to the 'GDSL' lipolytic enzyme family.

The protein resides in the secreted. This chain is GDSL esterase/lipase At5g63170, found in Arabidopsis thaliana (Mouse-ear cress).